The sequence spans 355 residues: S-methyl-5'-thioadenosine phosphorylase (355 aa).

Residues Thr45, 91 to 92, and 124 to 125 contribute to the phosphate site; these read RH and SA. Met226 serves as a coordination point for substrate. Ser227 provides a ligand contact to phosphate. 250-252 contacts substrate; sequence DYD.

This sequence belongs to the PNP/MTAP phosphorylase family. MTAP subfamily. Homotrimer.

The protein resides in the cytoplasm. Its subcellular location is the nucleus. The catalysed reaction is S-methyl-5'-thioadenosine + phosphate = 5-(methylsulfanyl)-alpha-D-ribose 1-phosphate + adenine. It functions in the pathway amino-acid biosynthesis; L-methionine biosynthesis via salvage pathway; S-methyl-5-thio-alpha-D-ribose 1-phosphate from S-methyl-5'-thioadenosine (phosphorylase route): step 1/1. Its function is as follows. Catalyzes the reversible phosphorylation of S-methyl-5'-thioadenosine (MTA) to adenine and 5-methylthioribose-1-phosphate. Involved in the breakdown of MTA, a major by-product of polyamine biosynthesis. Responsible for the first step in the methionine salvage pathway after MTA has been generated from S-adenosylmethionine. Has broad substrate specificity with 6-aminopurine nucleosides as preferred substrates. The sequence is that of S-methyl-5'-thioadenosine phosphorylase from Emericella nidulans (strain FGSC A4 / ATCC 38163 / CBS 112.46 / NRRL 194 / M139) (Aspergillus nidulans).